Consider the following 316-residue polypeptide: HTH-type transcriptional regulator cbl (316 aa).

The HTH lysR-type domain maps to 1–59; it reads MNFQQLKIIREAARQDYNLTEVANMLYTSQSGVSRHIRELEEELGIEIFIRRGKRLLGM. Residues 19-38 constitute a DNA-binding region (H-T-H motif); sequence LTEVANMLYTSQSGVSRHIR.

This sequence belongs to the LysR transcriptional regulatory family.

Functionally, may be an accessory regulatory protein within the cys regulon. This chain is HTH-type transcriptional regulator cbl (cbl), found in Klebsiella aerogenes (Enterobacter aerogenes).